Reading from the N-terminus, the 394-residue chain is Actin-related protein 2-A (394 aa).

ATP-binding positions include 160 to 162 (GDG), 214 to 218 (RMMKE), and 305 to 310 (GGSTMY).

It belongs to the actin family. ARP2 subfamily. Component of the Arp2/3 complex composed of actr2/arp2, actr3/arp3, arpc1b, arpc2, arpc3, arpc4 and arpc5.

The protein resides in the cytoplasm. The protein localises to the cytoskeleton. It localises to the cell projection. Its subcellular location is the nucleus. Its function is as follows. ATP-binding component of the Arp2/3 complex, a multiprotein complex that mediates actin polymerization upon stimulation by nucleation-promoting factor (NPF). The Arp2/3 complex mediates the formation of branched actin networks in the cytoplasm, providing the force for cell motility. Seems to contact the pointed end of the daughter actin filament. In addition to its role in the cytoplasmic cytoskeleton, the Arp2/3 complex also promotes actin polymerization in the nucleus, thereby regulating gene transcription and repair of damaged DNA. The Arp2/3 complex promotes homologous recombination (HR) repair in response to DNA damage by promoting nuclear actin polymerization, leading to drive motility of double-strand breaks (DSBs). This chain is Actin-related protein 2-A (actr2a), found in Danio rerio (Zebrafish).